Here is a 340-residue protein sequence, read N- to C-terminus: Ferrochelatase (340 aa).

His-189 and Glu-292 together coordinate Fe cation.

Belongs to the ferrochelatase family.

The protein resides in the cytoplasm. The enzyme catalyses heme b + 2 H(+) = protoporphyrin IX + Fe(2+). It participates in porphyrin-containing compound metabolism; protoheme biosynthesis; protoheme from protoporphyrin-IX: step 1/1. In terms of biological role, catalyzes the ferrous insertion into protoporphyrin IX. This chain is Ferrochelatase, found in Pseudomonas fluorescens biotype C.